A 501-amino-acid chain; its full sequence is Probable cysteine desulfurase, mitochondrial (501 aa).

Pyridoxal 5'-phosphate contacts are provided by residues 172–173 (AT), asparagine 252, glutamine 280, and 300–302 (SAH). Lysine 303 is subject to N6-(pyridoxal phosphate)lysine. Residue threonine 340 coordinates pyridoxal 5'-phosphate. Catalysis depends on cysteine 425, which acts as the Cysteine persulfide intermediate. Cysteine 425 serves as a coordination point for [2Fe-2S] cluster.

This sequence belongs to the class-V pyridoxal-phosphate-dependent aminotransferase family. NifS/IscS subfamily. Pyridoxal 5'-phosphate is required as a cofactor.

It localises to the mitochondrion. The enzyme catalyses (sulfur carrier)-H + L-cysteine = (sulfur carrier)-SH + L-alanine. Catalyzes the removal of elemental sulfur from cysteine to produce alanine. It supplies the inorganic sulfur for iron-sulfur (Fe-S) clusters. Plays a role in both tRNA-processing and mitochondrial metabolism. Involved in the 2-thio-modification of both 5-carboxymethylaminomethyl-2-thiouridine in mitochondrial tRNAs and 5-methoxycarbonylmethyl-2-thiouridine (mcm5s2U) in cytoplasmic tRNAs. The chain is Probable cysteine desulfurase, mitochondrial from Schizosaccharomyces pombe (strain 972 / ATCC 24843) (Fission yeast).